Consider the following 180-residue polypeptide: Geminin homolog (180 aa).

The segment covering 1–27 (MSRIGLQQLNNSARNSPFGSEKATGTK) has biased composition (polar residues). Residues 1 to 29 (MSRIGLQQLNNSARNSPFGSEKATGTKQI) are disordered.

This sequence belongs to the geminin family. As to quaternary structure, homodimer. Interacts with cdt-1; the interaction most likely inhibits the ability of cdt-1 to load the mini-chromosome maintenance (MCM) complex onto DNA and therefore reduces DNA replication licensing activity. Interacts with nob-1 and ceh-32.

Its subcellular location is the cytoplasm. The protein localises to the nucleus. Functionally, inhibits DNA replication by binding to the DNA replication licensing factor cdt-1. Its interaction with cdt-1 prevents the cdt-1 loading of the mini-chromosome maintenance (MCM) complex onto DNA and therefore DNA replication licencing. The chain is Geminin homolog from Caenorhabditis elegans.